The primary structure comprises 120 residues: Small ribosomal subunit protein eS24 (120 aa).

The interval 101-120 is disordered; the sequence is RDAGTKQKKGGSKGGQGAKG.

Belongs to the eukaryotic ribosomal protein eS24 family.

This chain is Small ribosomal subunit protein eS24, found in Saccharolobus solfataricus (strain ATCC 35092 / DSM 1617 / JCM 11322 / P2) (Sulfolobus solfataricus).